The following is a 291-amino-acid chain: Beta-lactamase Toho-1 (291 aa).

A signal peptide spans 1 to 29; sequence MMTQSIRRSMLTVMATLPLLFSSATLHAQ. Catalysis depends on S73, which acts as the Acyl-ester intermediate. 237–239 serves as a coordination point for substrate; that stretch reads KTG.

This sequence belongs to the class-A beta-lactamase family. In terms of assembly, monomer.

It catalyses the reaction a beta-lactam + H2O = a substituted beta-amino acid. In terms of biological role, has strong cefotaxime-hydrolyzing activity. The polypeptide is Beta-lactamase Toho-1 (bla) (Escherichia coli).